Here is a 362-residue protein sequence, read N- to C-terminus: Peptide chain release factor 1 (362 aa).

The residue at position 235 (glutamine 235) is an N5-methylglutamine.

The protein belongs to the prokaryotic/mitochondrial release factor family. Post-translationally, methylated by PrmC. Methylation increases the termination efficiency of RF1.

It is found in the cytoplasm. Peptide chain release factor 1 directs the termination of translation in response to the peptide chain termination codons UAG and UAA. This is Peptide chain release factor 1 from Acinetobacter baumannii (strain ACICU).